Consider the following 871-residue polypeptide: DNA mismatch repair protein MutS (871 aa).

Residue 621–628 participates in ATP binding; the sequence is GPNMAGKS.

Belongs to the DNA mismatch repair MutS family.

Functionally, this protein is involved in the repair of mismatches in DNA. It is possible that it carries out the mismatch recognition step. This protein has a weak ATPase activity. This chain is DNA mismatch repair protein MutS, found in Geobacter sulfurreducens (strain ATCC 51573 / DSM 12127 / PCA).